Reading from the N-terminus, the 339-residue chain is Glycerol-3-phosphate dehydrogenase [NAD(P)+] (339 aa).

Residues Ser31, Trp32, Arg52, and Lys122 each coordinate NADPH. Sn-glycerol 3-phosphate contacts are provided by Lys122 and Gly152. Ala156 provides a ligand contact to NADPH. The sn-glycerol 3-phosphate site is built by Lys207, Asp260, Ser270, Arg271, and Asn272. The active-site Proton acceptor is the Lys207. Residue Arg271 coordinates NADPH. Glu293 contacts NADPH.

This sequence belongs to the NAD-dependent glycerol-3-phosphate dehydrogenase family.

The protein localises to the cytoplasm. The catalysed reaction is sn-glycerol 3-phosphate + NAD(+) = dihydroxyacetone phosphate + NADH + H(+). It catalyses the reaction sn-glycerol 3-phosphate + NADP(+) = dihydroxyacetone phosphate + NADPH + H(+). It functions in the pathway membrane lipid metabolism; glycerophospholipid metabolism. Its function is as follows. Catalyzes the reduction of the glycolytic intermediate dihydroxyacetone phosphate (DHAP) to sn-glycerol 3-phosphate (G3P), the key precursor for phospholipid synthesis. The chain is Glycerol-3-phosphate dehydrogenase [NAD(P)+] from Tropheryma whipplei (strain Twist) (Whipple's bacillus).